A 622-amino-acid chain; its full sequence is MSLDISQFPVLAQANTPNELRQLPQALLPQLADELREFLLKSVGMSSGHFASGLGTVELTVALHYVYNTPFDRLIWDVGHQAYPHKILTGRRDRMHTIRQKNGLHPFPWREESEYDTFSVGHSGTSISAALAMAVAAEKEQAGRKVVAVIGDGAMTGGMVFEAMNHAGDLHNDMLMVLNDNEMSISENVGALNNHLAQLMSGRFYTTIRESSKKVLKGMPVIKEMAKRTEEHLKGMVVPGTLFEELGFNYIGPIDGHDVDALVETLRNMRNLKGPQVLHIMTKKGRGYEPAEKDPIGWHAVPKFDPSLFKKPATKPGLPTFSQVFGKWLCDIAEQDEKVLGITPAMREGSGMVEFSQRFPKQYFDAAIAEQHAVTLGAGFACEGYKPVVAIYSTFLQRGYDQLIHDVALQRLPVLFAIDRGGIVGADGPTHQGAFDLSFMRCIPNMVIMAPSDENECRQMLYTGYCYDAGPSAVRYPRGSATGATQVEAMTALPIGKGVIKRLGKRIALLNFGTTLAAALTAAESLDATVVDMRFVKPLDVDLVKEMAQTHDVLVTVEENAIMGGAGSGVLELLQQLKMPKPVLQIGLPDEFIKHGSPDEVIHDLQLDAEGMLAQINAYLAN.

Thiamine diphosphate is bound by residues histidine 80 and 121-123; that span reads GHS. Aspartate 152 is a Mg(2+) binding site. Residues 153–154, asparagine 181, tyrosine 288, and glutamate 370 each bind thiamine diphosphate; that span reads GA. Asparagine 181 provides a ligand contact to Mg(2+).

This sequence belongs to the transketolase family. DXPS subfamily. As to quaternary structure, homodimer. It depends on Mg(2+) as a cofactor. Thiamine diphosphate is required as a cofactor.

It catalyses the reaction D-glyceraldehyde 3-phosphate + pyruvate + H(+) = 1-deoxy-D-xylulose 5-phosphate + CO2. The protein operates within metabolic intermediate biosynthesis; 1-deoxy-D-xylulose 5-phosphate biosynthesis; 1-deoxy-D-xylulose 5-phosphate from D-glyceraldehyde 3-phosphate and pyruvate: step 1/1. Functionally, catalyzes the acyloin condensation reaction between C atoms 2 and 3 of pyruvate and glyceraldehyde 3-phosphate to yield 1-deoxy-D-xylulose-5-phosphate (DXP). The sequence is that of 1-deoxy-D-xylulose-5-phosphate synthase from Shewanella oneidensis (strain ATCC 700550 / JCM 31522 / CIP 106686 / LMG 19005 / NCIMB 14063 / MR-1).